The sequence spans 319 residues: MNNTKKRGVLLVNLGTPEEATAPAVKRFLSQFLHDQRVVDMTRWLWCPILHGIILPIRSPKVAKLYQTVWMKEGSPLMVYSKRQQVELQAKLNCPVEIGMTYGTPSVLDGVNKLQAQGVDEICVLPLYPQYSGTTTGAAYDALAHALRKVAVVPSIQFIRDYHDHPLYIKALAESVRQSWQAQGKGDYLLCSYHGIPQRYADNGDIYPLHCEMTTELLRLELGLDKSQIGTTYQSRFGREEWLQPYTDKTLESLPAKGIKSLDVITPAFSVDCLETLEEISEQGQESFLHAGGEQYRFIPCLNDAPSHIEMMARLVTER.

Residues H194 and E275 each contribute to the Fe cation site.

The protein belongs to the ferrochelatase family.

The protein resides in the cytoplasm. The catalysed reaction is heme b + 2 H(+) = protoporphyrin IX + Fe(2+). Its pathway is porphyrin-containing compound metabolism; protoheme biosynthesis; protoheme from protoporphyrin-IX: step 1/1. Functionally, catalyzes the ferrous insertion into protoporphyrin IX. The polypeptide is Ferrochelatase (Vibrio vulnificus (strain YJ016)).